The primary structure comprises 583 residues: Interactor of constitutive active ROPs 2, chloroplastic (583 aa).

The N-terminal 55 residues, 1 to 55, are a transit peptide targeting the chloroplast; that stretch reads MQTPKPRPGSLEVPQKKSPASTPKTARKLKTSESDPVSSPNTKIRTPKTQSPKVV. 2 disordered regions span residues 1–80 and 101–125; these read MQTP…PELA and EALK…NASE. Residues 34 to 52 are compositionally biased toward polar residues; it reads SDPVSSPNTKIRTPKTQSP. 2 coiled-coil regions span residues 74–207 and 238–516; these read GKTP…DAKE and MKMS…AAAT. Over residues 102-115 the composition is skewed to basic and acidic residues; it reads ALKKEAQDQAEETK. Residues 518-583 form a disordered region; it reads LSGGNNNNNS…IGVLLKKSQK (66 aa). Low complexity predominate over residues 519–529; that stretch reads SGGNNNNNSNG. At Ser-540 the chain carries Phosphoserine.

This sequence belongs to the ICR family. Interacts with ARAC8, ARAC11 and KIN13A in vitro, but not with ICR1 or SEC3A.

The protein localises to the plastid. Its subcellular location is the chloroplast. Acts as a scaffold, mediating interaction of ROPs with different proteins. This chain is Interactor of constitutive active ROPs 2, chloroplastic (ICR2), found in Arabidopsis thaliana (Mouse-ear cress).